Reading from the N-terminus, the 310-residue chain is uncharacterized protein (310 aa).

A disordered region spans residues 1–70 (MAGNSQRRGA…ARGRTDETET (70 aa)). Residues 49-62 (AAKRAKAQQRRPAR) are compositionally biased toward basic residues. 3 residues coordinate S-adenosyl-L-methionine: G262, V282, and L291.

Belongs to the class IV-like SAM-binding methyltransferase superfamily. RNA methyltransferase TrmH family.

This is an uncharacterized protein from Mycobacterium ulcerans (strain Agy99).